Reading from the N-terminus, the 42-residue chain is Cytochrome b559 subunit beta (42 aa).

Residues 17-33 (WLSIHALAVPTVFFLGA) form a helical membrane-spanning segment. Residue histidine 21 coordinates heme.

The protein belongs to the PsbE/PsbF family. In terms of assembly, heterodimer of an alpha subunit and a beta subunit. PSII is composed of 1 copy each of membrane proteins PsbA, PsbB, PsbC, PsbD, PsbE, PsbF, PsbH, PsbI, PsbJ, PsbK, PsbL, PsbM, PsbT, PsbX, PsbY, PsbZ, Psb30/Ycf12, at least 3 peripheral proteins of the oxygen-evolving complex and a large number of cofactors. It forms dimeric complexes. Heme b is required as a cofactor.

The protein localises to the plastid. Its subcellular location is the chloroplast thylakoid membrane. Its function is as follows. This b-type cytochrome is tightly associated with the reaction center of photosystem II (PSII). PSII is a light-driven water:plastoquinone oxidoreductase that uses light energy to abstract electrons from H(2)O, generating O(2) and a proton gradient subsequently used for ATP formation. It consists of a core antenna complex that captures photons, and an electron transfer chain that converts photonic excitation into a charge separation. The chain is Cytochrome b559 subunit beta from Tupiella akineta (Green alga).